We begin with the raw amino-acid sequence, 178 residues long: AIIPKQFLKRIERTGFGQFLFYEWRFDEAGNINPEFEPNKPRYAGASVLISRANFGCGSSREHAPWAIMDYGFRCVIAPSFADIFYNNCFKNGILPIKLSEEQVEDLFQRTAKHDNYQLNVDLNEKTITDDYGLRIEFDLDEHRRQFLLQGLDDIGLTLQHESEILAYEQKRAAKQGA.

It belongs to the LeuD family. LeuD type 1 subfamily. As to quaternary structure, heterodimer of LeuC and LeuD.

It carries out the reaction (2R,3S)-3-isopropylmalate = (2S)-2-isopropylmalate. It functions in the pathway amino-acid biosynthesis; L-leucine biosynthesis; L-leucine from 3-methyl-2-oxobutanoate: step 2/4. In terms of biological role, catalyzes the isomerization between 2-isopropylmalate and 3-isopropylmalate, via the formation of 2-isopropylmaleate. This is 3-isopropylmalate dehydratase small subunit (leuD) from Paenibacillus polymyxa (Bacillus polymyxa).